Consider the following 421-residue polypeptide: Histidine--tRNA ligase (421 aa).

This sequence belongs to the class-II aminoacyl-tRNA synthetase family. In terms of assembly, homodimer.

The protein localises to the cytoplasm. It carries out the reaction tRNA(His) + L-histidine + ATP = L-histidyl-tRNA(His) + AMP + diphosphate + H(+). The protein is Histidine--tRNA ligase of Solidesulfovibrio magneticus (strain ATCC 700980 / DSM 13731 / RS-1) (Desulfovibrio magneticus).